The following is a 423-amino-acid chain: COP9 signalosome complex subunit 3 (423 aa).

Residue Ala2 is modified to N-acetylalanine. One can recognise a PCI domain in the interval 197–365; it reads NFERALYFYE…GMVSFHDNPE (169 aa). The segment at 402–423 is disordered; it reads QFVQKSMGSQEDDSGNKPSSYS. Ser407, Ser410, and Ser423 each carry phosphoserine.

The protein belongs to the CSN3 family. As to quaternary structure, component of the CSN complex, composed of COPS1/GPS1, COPS2, COPS3, COPS4, COPS5, COPS6, COPS7 (COPS7A or COPS7B), COPS8 and COPS9. In the complex, it probably interacts directly with COPS1, COPS4, COPS8 and COPS9. Interacts with CK2 and PKD. Interacts with the translation initiation factor EIF3S6 and IKBKG. Interacts with ERCC6.

The protein resides in the cytoplasm. The protein localises to the nucleus. In terms of biological role, component of the COP9 signalosome complex (CSN), a complex involved in various cellular and developmental processes. The CSN complex is an essential regulator of the ubiquitin (Ubl) conjugation pathway by mediating the deneddylation of the cullin subunits of SCF-type E3 ligase complexes, leading to decrease the Ubl ligase activity of SCF-type complexes such as SCF, CSA or DDB2. The complex is also involved in phosphorylation of p53/TP53, c-jun/JUN, IkappaBalpha/NFKBIA, ITPK1 and IRF8/ICSBP, possibly via its association with CK2 and PKD kinases. CSN-dependent phosphorylation of TP53 and JUN promotes and protects degradation by the Ubl system, respectively. Essential to maintain the survival of epiblast cells and thus the development of the postimplantation embryo. This is COP9 signalosome complex subunit 3 (COPS3) from Bos taurus (Bovine).